Consider the following 527-residue polypeptide: Transcription factor bHLH157 (527 aa).

2 disordered regions span residues S295–Q318 and S335–Q368. Positions T307–Q318 are enriched in polar residues. Positions W341–G348 match the Nuclear localization signal motif. Residues K343–Q368 are compositionally biased toward basic and acidic residues. In terms of domain architecture, bHLH spans A354–M403.

This sequence belongs to the bHLH protein family. LHW subfamily. As to quaternary structure, homodimer.

It is found in the nucleus. Transcription factor that may regulate root development. The chain is Transcription factor bHLH157 (BHLH157) from Arabidopsis thaliana (Mouse-ear cress).